The chain runs to 712 residues: Secretin OutD (712 aa).

Positions 1-27 (MLGKGIKKSWGWLGLTVLLLGSPCGWA) are cleaved as a signal peptide. The tract at residues 28-124 (AEFSASFKGT…LANNEQPGVG (97 aa)) is N0. The segment at 126 to 190 (ELVTRVVPLN…DIVNTVDKTG (65 aa)) is N1. Residues 191–264 (DREMITVSLN…MIRQLDRKQV (74 aa)) form an N2 region. Positions 267 to 394 (GGTKVIYLKY…DLEQVINQLD (128 aa)) are N3. Positions 288–342 (GNGTSGNRNSSSTNSSRPSSTRSSSTLNNSNSSSSGSSSGSGSSSSSSSSSMGFG) are disordered. The secretin stretch occupies residues 399-651 (QVLVEAIIAE…LFLRPTIIRD (253 aa)). The s domain stretch occupies residues 653–712 (QQYQQASISKYNSFNNEQQQQRGQGNSVLDNNTLRLSGGNTYTFRQVQSSISAFYQPEGR).

It belongs to the bacterial secretin family. GSP D subfamily. Forms a cylindrical channel with 15 subunits.

The protein localises to the cell outer membrane. Its function is as follows. Involved in a type II secretion system (T2SS, formerly general secretion pathway, GSP) for the export of proteins. Required for the translocation of the multiple pectic enzymes. This subunit forms the outer membrane channel. This is Secretin OutD (outD) from Dickeya chrysanthemi (Pectobacterium chrysanthemi).